The sequence spans 322 residues: Elongation factor Ts, mitochondrial (322 aa).

The protein belongs to the EF-Ts family.

The protein localises to the mitochondrion. Associates with the EF-Tu.GDP complex and induces the exchange of GDP to GTP. It remains bound to the aminoacyl-tRNA.EF-Tu.GTP complex up to the GTP hydrolysis stage on the ribosome. The polypeptide is Elongation factor Ts, mitochondrial (Chlamydomonas reinhardtii (Chlamydomonas smithii)).